The primary structure comprises 705 residues: tRNA 5-methylaminomethyl-2-thiouridine biosynthesis bifunctional protein MnmC (705 aa).

The interval 1–241 is tRNA (mnm(5)s(2)U34)-methyltransferase; that stretch reads MTIKTADIQF…KREMLAGIIA (241 aa). The segment at 289–705 is FAD-dependent cmnm(5)s(2)U34 oxidoreductase; it reads IGAGIAGASM…LIRQLIRREV (417 aa).

This sequence in the N-terminal section; belongs to the methyltransferase superfamily. tRNA (mnm(5)s(2)U34)-methyltransferase family. In the C-terminal section; belongs to the DAO family. FAD serves as cofactor.

It localises to the cytoplasm. The catalysed reaction is 5-aminomethyl-2-thiouridine(34) in tRNA + S-adenosyl-L-methionine = 5-methylaminomethyl-2-thiouridine(34) in tRNA + S-adenosyl-L-homocysteine + H(+). Catalyzes the last two steps in the biosynthesis of 5-methylaminomethyl-2-thiouridine (mnm(5)s(2)U) at the wobble position (U34) in tRNA. Catalyzes the FAD-dependent demodification of cmnm(5)s(2)U34 to nm(5)s(2)U34, followed by the transfer of a methyl group from S-adenosyl-L-methionine to nm(5)s(2)U34, to form mnm(5)s(2)U34. This Pseudoalteromonas atlantica (strain T6c / ATCC BAA-1087) protein is tRNA 5-methylaminomethyl-2-thiouridine biosynthesis bifunctional protein MnmC.